A 266-amino-acid polypeptide reads, in one-letter code: Thymidylate synthase (266 aa).

Arginine 24 contacts dUMP. Position 54 (histidine 54) interacts with (6R)-5,10-methylene-5,6,7,8-tetrahydrofolate. Arginine 129–arginine 130 contacts dUMP. Cysteine 149 (nucleophile) is an active-site residue. Residues arginine 169–aspartate 172, asparagine 180, and histidine 210–tyrosine 212 contribute to the dUMP site. Aspartate 172 is a (6R)-5,10-methylene-5,6,7,8-tetrahydrofolate binding site. Alanine 265 is a binding site for (6R)-5,10-methylene-5,6,7,8-tetrahydrofolate.

It belongs to the thymidylate synthase family. Bacterial-type ThyA subfamily. In terms of assembly, homodimer.

Its subcellular location is the cytoplasm. It catalyses the reaction dUMP + (6R)-5,10-methylene-5,6,7,8-tetrahydrofolate = 7,8-dihydrofolate + dTMP. Its pathway is pyrimidine metabolism; dTTP biosynthesis. Catalyzes the reductive methylation of 2'-deoxyuridine-5'-monophosphate (dUMP) to 2'-deoxythymidine-5'-monophosphate (dTMP) while utilizing 5,10-methylenetetrahydrofolate (mTHF) as the methyl donor and reductant in the reaction, yielding dihydrofolate (DHF) as a by-product. This enzymatic reaction provides an intracellular de novo source of dTMP, an essential precursor for DNA biosynthesis. This is Thymidylate synthase from Mycolicibacterium smegmatis (strain ATCC 700084 / mc(2)155) (Mycobacterium smegmatis).